We begin with the raw amino-acid sequence, 397 residues long: Probable sugar efflux transporter (397 aa).

A run of 12 helical transmembrane segments spans residues 15 to 35 (VIVM…PVAL), 51 to 71 (GLMI…CMLM), 80 to 100 (LLIS…FAWN), 103 to 123 (VLLI…SITA), 137 to 157 (QALG…LPLG), 169 to 189 (TFTL…RLLP), 209 to 229 (PMLI…FTAY), 246 to 266 (KATA…VLFS), 277 to 297 (LLSS…VSGI), 299 to 319 (GAIF…SLAM), 333 to 353 (VATA…ALIG), and 365 to 385 (IGYV…LMFL).

This sequence belongs to the major facilitator superfamily. SotB (TC 2.A.1.2) family.

It is found in the cell inner membrane. Its function is as follows. Involved in the efflux of sugars. The physiological role may be the reduction of the intracellular concentration of toxic sugars or sugar metabolites. The sequence is that of Probable sugar efflux transporter from Mannheimia succiniciproducens (strain KCTC 0769BP / MBEL55E).